The primary structure comprises 440 residues: MSTSGPAAPGDVPALPPPPPGPGSGPAPPAPAATARDTMDGRAELPIFPRAGVPPLAASDTVPAVPEGAGAARPAAPPRPTSFSVLDILDPNKFNSRRRRCVLLGPVVPATCAPCAPAACVAVPAASGRSPRAELERRALSAATGVAAAAGAEPTSAGDSYRADEAEANGYSSGSGRSPTADSEDEAPEDEDEEEAPEVQDAQGTEEPRGGSGGLGARGSGCPGAAEVEASPVDDTAAPGPRGNSPGAPGPPATATGAGSAGSTPQGAAVTTKPKRKRTGSDSKSGKPRRARTAFTYEQLVALENKFKATRYLSVCERLNLALSLSLTETQVKIWFQNRRTKWKKQNPGADTSAPTGGGGGPGPGAGPGAGLPGGLSPLSPSPPMGAPLALHGPAGYPAHSPGGLVCAAQLPFLSSPAVLSPFVLGSQTYGAPAFYAPHL.

Residues 1 to 13 (MSTSGPAAPGDVP) are compositionally biased toward low complexity. Disordered regions lie at residues 1–82 (MSTS…RPTS), 145–291 (GVAA…PRRA), and 342–387 (KWKK…PMGA). Residues 14 to 31 (ALPPPPPGPGSGPAPPAP) show a composition bias toward pro residues. Composition is skewed to low complexity over residues 62-74 (VPAV…AARP) and 145-158 (GVAA…TSAG). The span at 170-181 (GYSSGSGRSPTA) shows a compositional bias: polar residues. A compositionally biased stretch (acidic residues) spans 182 to 198 (DSEDEAPEDEDEEEAPE). Positions 210-222 (GGSGGLGARGSGC) are enriched in gly residues. Residues 237-269 (AAPGPRGNSPGAPGPPATATGAGSAGSTPQGAA) show a composition bias toward low complexity. Residues 288-347 (PRRARTAFTYEQLVALENKFKATRYLSVCERLNLALSLSLTETQVKIWFQNRRTKWKKQN) constitute a DNA-binding region (homeobox). The span at 356-374 (TGGGGGPGPGAGPGAGLPG) shows a compositional bias: gly residues.

Belongs to the NK-1 homeobox family.

Its subcellular location is the nucleus. In terms of biological role, may be required for the coordinated crosstalk of factors involved in the maintenance of energy homeostasis, possibly by regulating the transcription of specific factors involved in energy balance. The polypeptide is NK1 transcription factor-related protein 1 (Mus musculus (Mouse)).